The sequence spans 444 residues: Porin AaxA (444 aa).

The N-terminal stretch at 1–19 is a signal peptide; the sequence is MAFSRFYLLTALYTGGILA. The interval 42 to 68 is disordered; it reads KNSTQDSDSSPSESSPHPRQEPRRHVL. The span at 46–56 shows a compositional bias: low complexity; the sequence is QDSDSSPSESS.

This sequence belongs to the OprB family.

It is found in the cell outer membrane. In terms of biological role, facilitates L-arginine uptake, as part of the AaxABC system. The arginine uptake by the bacterium in the macrophage may be a virulence factor against the host innate immune response. This chain is Porin AaxA (aaxA), found in Chlamydia felis (strain Fe/C-56) (Chlamydophila felis).